Consider the following 456-residue polypeptide: UDP-N-acetylmuramate--L-alanine ligase (456 aa).

114–120 (GTHGKTT) is an ATP binding site.

It belongs to the MurCDEF family.

It localises to the cytoplasm. The enzyme catalyses UDP-N-acetyl-alpha-D-muramate + L-alanine + ATP = UDP-N-acetyl-alpha-D-muramoyl-L-alanine + ADP + phosphate + H(+). The protein operates within cell wall biogenesis; peptidoglycan biosynthesis. Functionally, cell wall formation. The polypeptide is UDP-N-acetylmuramate--L-alanine ligase (murC) (Porphyromonas gingivalis (strain ATCC BAA-308 / W83)).